The sequence spans 214 residues: Oocyte zinc finger protein XlCOF10 (214 aa).

7 C2H2-type zinc fingers span residues 1–23 (FSCS…RQLH), 29–51 (FTCS…HRIH), 57–79 (FTCD…QKSH), 85–107 (FCCS…QRTH), 113–135 (FTCT…QKSH), 141–163 (FSCS…QRIH), and 169–191 (FSCS…EKCH).

This sequence belongs to the krueppel C2H2-type zinc-finger protein family.

Its subcellular location is the nucleus. Functionally, may be involved in transcriptional regulation. The chain is Oocyte zinc finger protein XlCOF10 from Xenopus laevis (African clawed frog).